A 114-amino-acid chain; its full sequence is Protein LLP homolog (114 aa).

Basic residues-rich tracts occupy residues 1–21 (MAKSLRSKWKRKMRAEKRKKN) and 91–108 (QRKKLKAQRLKGKKKSKL). Disordered stretches follow at residues 1–23 (MAKSLRSKWKRKMRAEKRKKNAP) and 91–114 (QRKKLKAQRLKGKKKSKLPKGLAW).

This sequence belongs to the learning-associated protein family.

The protein resides in the nucleus. It localises to the nucleolus. The protein localises to the chromosome. Functionally, regulates dendritic and spine growth and synaptic transmission. This is Protein LLP homolog (LLPH) from Gallus gallus (Chicken).